A 297-amino-acid polypeptide reads, in one-letter code: Probable lipid kinase YegS-like (297 aa).

One can recognise a DAGKc domain in the interval 2 to 131 (STFPASLLIL…IDIARVNDKT (130 aa)). ATP contacts are provided by residues Thr-40, 66 to 72 (GDGTINE), and Thr-93. Mg(2+) contacts are provided by Leu-213, Asp-216, and Leu-218. Glu-269 acts as the Proton acceptor in catalysis.

The protein belongs to the diacylglycerol/lipid kinase family. YegS lipid kinase subfamily. Mg(2+) is required as a cofactor. The cofactor is Ca(2+).

Its subcellular location is the cytoplasm. Its function is as follows. Probably phosphorylates lipids; the in vivo substrate is unknown. This is Probable lipid kinase YegS-like from Klebsiella pneumoniae (strain 342).